The following is a 128-amino-acid chain: uncharacterized protein (128 aa).

Residues 1–26 (MNSATSETTTNTGAAETTTSTGAAET) are disordered. A helical membrane pass occupies residues 105–127 (IANGLLTNNGISVFISTVLLAIV).

The protein belongs to the flocculin family.

The protein resides in the membrane. This is an uncharacterized protein from Saccharomyces cerevisiae (strain ATCC 204508 / S288c) (Baker's yeast).